A 231-amino-acid polypeptide reads, in one-letter code: Lactate utilization protein C (231 aa).

This sequence belongs to the LutC/YkgG family.

Functionally, is involved in L-lactate degradation and allows cells to grow with lactate as the sole carbon source. This chain is Lactate utilization protein C, found in Macrococcus caseolyticus (strain JCSC5402) (Macrococcoides caseolyticum).